The following is a 428-amino-acid chain: Enolase (428 aa).

Q163 contacts (2R)-2-phosphoglycerate. Catalysis depends on E205, which acts as the Proton donor. Positions 242, 285, and 312 each coordinate Mg(2+). Residues K337, R366, S367, and K388 each contribute to the (2R)-2-phosphoglycerate site. K337 (proton acceptor) is an active-site residue.

This sequence belongs to the enolase family. Requires Mg(2+) as cofactor.

It is found in the cytoplasm. The protein resides in the secreted. The protein localises to the cell surface. The catalysed reaction is (2R)-2-phosphoglycerate = phosphoenolpyruvate + H2O. Its pathway is carbohydrate degradation; glycolysis; pyruvate from D-glyceraldehyde 3-phosphate: step 4/5. Functionally, catalyzes the reversible conversion of 2-phosphoglycerate (2-PG) into phosphoenolpyruvate (PEP). It is essential for the degradation of carbohydrates via glycolysis. The sequence is that of Enolase from Finegoldia magna (strain ATCC 29328 / DSM 20472 / WAL 2508) (Peptostreptococcus magnus).